Consider the following 440-residue polypeptide: MESQQLSQHSPNSHGSACASVTSKEVHTNQDPLDVSASKTEECEKASTKANSQQTTTPASSAVPENPHHASPQPASVPPPQNGPYPQQCMMTQNQANPSGWSFYGHPSMIPYTPYQMSPMYFPPGPQSQFPQYPSSVGTPLSTPSPESGNTFTDSSSADSDMTSTKKYVRPPPMLTSPNDFPNWVKTYIKFLQNSNLGGIIPTVNGKPVRQITDDELTFLYNTFQIFAPSQFLPTWVKDILSVDYTDIMKILSKSIEKMQSDTQEANDIVTLANLQYNGSTPADAFETKVTNIIDRLNNNGIHINNKVACQLIMRGLSGEYKFLRYTRHRHLNMTVAELFLDIHAIYEEQQGSRNSKPNYRRNPSDEKNDSRSYTNTTKPKVIARNPQKTNNSKSKTARAHNVSTSNNSPSTDNDSISKSTTEPIQLNNKHDLHLRPETY.

3 stretches are compositionally biased toward polar residues: residues Met1–Ser23, Thr48–Ser60, and Gln127–Phe152. Disordered stretches follow at residues Met1 to Gln93, Pro126 to Pro173, and Gly352 to Tyr440. The span at Thr153–Thr165 shows a compositional bias: low complexity. The interval Asn299–His401 is RNA-binding. Positions Asn402 to Ser418 are enriched in low complexity. Ser416 is subject to Phosphoserine. Residues Lys419–Asn428 are compositionally biased toward polar residues. Residues Asn429–Tyr440 are compositionally biased toward basic and acidic residues.

Homotrimer.

The protein resides in the cytoplasm. Capsid protein (CA) is the structural component of the virus-like particle (VLP), forming the shell that encapsulates the retrotransposons dimeric RNA genome. The particles are assembled from trimer-clustered units and there are holes in the capsid shells that allow for the diffusion of macromolecules. CA also has nucleocapsid-like chaperone activity, promoting primer tRNA(i)-Met annealing to the multipartite primer-binding site (PBS), dimerization of Ty1 RNA and initiation of reverse transcription. The chain is Transposon TyH3 Gag polyprotein (TY1A) from Saccharomyces cerevisiae (Baker's yeast).